Reading from the N-terminus, the 629-residue chain is Transmembrane 9 superfamily protein C1105.08 (629 aa).

The first 26 residues, 1 to 26, serve as a signal peptide directing secretion; the sequence is MLLPSIPSCSFSFVVFVSVLLQTCFS. Topologically, residues 27–266 are lumenal; sequence FQLTPLSPKN…MHIESRQIRW (240 aa). N-linked (GlcNAc...) asparagine glycosylation occurs at asparagine 157. Residues 267–287 traverse the membrane as a helical segment; that stretch reads IFIIHSAIIDTFLIFVVSIIL. Over 288–337 the chain is Cytoplasmic; that stretch reads YRTLNRDINKYNSAFVDQEDVQEDFGWKLVHGDVFRPPRRPMLFSILLGT. The chain crosses the membrane as a helical span at residues 338–358; it reads GAQLLFMSSGIVLFAIFGIVA. The Lumenal portion of the chain corresponds to 359–364; the sequence is PSRRGS. Residues 365–385 traverse the membrane as a helical segment; sequence LATATVALFIISGFVSGYVSA. Topologically, residues 386 to 401 are cytoplasmic; the sequence is LSYKLMQGMLRKRNLL. A helical membrane pass occupies residues 402–422; the sequence is LTPFVVPGFMLAAALFFNMVF. At 423-436 the chain is on the lumenal side; that stretch reads WSKSSSSTVPFSSW. The chain crosses the membrane as a helical span at residues 437–457; it reads LLLIFLYLLFTVPLSFVGSLI. The Cytoplasmic portion of the chain corresponds to 458-488; the sequence is GFRSREFVPPVRTNQIPRQIPSHSIWLSSFP. Residues 489–509 traverse the membrane as a helical segment; it reads SAIIGGSIPFLVILIELFSIL. Residues 510–519 are Lumenal-facing; sequence DSLWFHPLYF. Residues 520 to 544 form a helical membrane-spanning segment; sequence MFGFSFFCFGILVTTCIMVSIITVY. Topologically, residues 545–558 are cytoplasmic; that stretch reads FQLCSENYNWWWRS. The chain crosses the membrane as a helical span at residues 559 to 579; sequence FITPGFCGIYVFIFSVFYWFF. At 580 to 598 the chain is on the lumenal side; it reads KISSSSLATAVLYFGYSLL. The chain crosses the membrane as a helical span at residues 599–619; the sequence is ISVLVFFLCGSVGFFGAFLFV. The Cytoplasmic segment spans residues 620 to 629; the sequence is NKIYASIKID.

It belongs to the nonaspanin (TM9SF) (TC 9.A.2) family.

The protein localises to the golgi apparatus membrane. It is found in the vacuole membrane. This chain is Transmembrane 9 superfamily protein C1105.08, found in Schizosaccharomyces pombe (strain 972 / ATCC 24843) (Fission yeast).